Here is a 159-residue protein sequence, read N- to C-terminus: Eukaryotic translation initiation factor 5A-3 (159 aa).

Positions 1–12 (MSDEEHQFESKA) are enriched in basic and acidic residues. A disordered region spans residues 1–21 (MSDEEHQFESKADAGASKTYP). Hypusine is present on K52.

It belongs to the eIF-5A family. Post-translationally, lys-52 undergoes hypusination, a unique post-translational modification that consists in the addition of a butylamino group from spermidine to lysine side chain, leading to the formation of the unusual amino acid hypusine. eIF-5As are the only known proteins to undergo this modification, which is essential for their function.

In terms of biological role, translation factor that promotes translation elongation and termination, particularly upon ribosome stalling at specific amino acid sequence contexts. Binds between the exit (E) and peptidyl (P) site of the ribosome and promotes rescue of stalled ribosome: specifically required for efficient translation of polyproline-containing peptides as well as other motifs that stall the ribosome. Acts as a ribosome quality control (RQC) cofactor by joining the RQC complex to facilitate peptidyl transfer during CAT tailing step. The protein is Eukaryotic translation initiation factor 5A-3 of Solanum lycopersicum (Tomato).